The sequence spans 506 residues: Proline--tRNA ligase (506 aa).

Belongs to the class-II aminoacyl-tRNA synthetase family. ProS type 3 subfamily. In terms of assembly, homodimer.

The protein localises to the cytoplasm. It catalyses the reaction tRNA(Pro) + L-proline + ATP = L-prolyl-tRNA(Pro) + AMP + diphosphate. Its function is as follows. Catalyzes the attachment of proline to tRNA(Pro) in a two-step reaction: proline is first activated by ATP to form Pro-AMP and then transferred to the acceptor end of tRNA(Pro). The chain is Proline--tRNA ligase from Rhodopirellula baltica (strain DSM 10527 / NCIMB 13988 / SH1).